The sequence spans 259 residues: 3-deoxy-manno-octulosonate cytidylyltransferase (259 aa).

The protein belongs to the KdsB family.

The protein localises to the cytoplasm. It catalyses the reaction 3-deoxy-alpha-D-manno-oct-2-ulosonate + CTP = CMP-3-deoxy-beta-D-manno-octulosonate + diphosphate. Its pathway is nucleotide-sugar biosynthesis; CMP-3-deoxy-D-manno-octulosonate biosynthesis; CMP-3-deoxy-D-manno-octulosonate from 3-deoxy-D-manno-octulosonate and CTP: step 1/1. It functions in the pathway bacterial outer membrane biogenesis; lipopolysaccharide biosynthesis. In terms of biological role, activates KDO (a required 8-carbon sugar) for incorporation into bacterial lipopolysaccharide in Gram-negative bacteria. The chain is 3-deoxy-manno-octulosonate cytidylyltransferase from Xanthomonas euvesicatoria pv. vesicatoria (strain 85-10) (Xanthomonas campestris pv. vesicatoria).